The sequence spans 161 residues: Cysteine dioxygenase (161 aa).

Fe cation-binding residues include His75, His77, and His125.

Belongs to the cysteine dioxygenase family. Fe cation serves as cofactor.

It carries out the reaction L-cysteine + O2 = 3-sulfino-L-alanine + H(+). The protein is Cysteine dioxygenase (cdoA) of Bacillus subtilis (strain 168).